The primary structure comprises 573 residues: Proline--tRNA ligase (573 aa).

The protein belongs to the class-II aminoacyl-tRNA synthetase family. ProS type 1 subfamily. Homodimer.

It is found in the cytoplasm. The enzyme catalyses tRNA(Pro) + L-proline + ATP = L-prolyl-tRNA(Pro) + AMP + diphosphate. Its function is as follows. Catalyzes the attachment of proline to tRNA(Pro) in a two-step reaction: proline is first activated by ATP to form Pro-AMP and then transferred to the acceptor end of tRNA(Pro). As ProRS can inadvertently accommodate and process non-cognate amino acids such as alanine and cysteine, to avoid such errors it has two additional distinct editing activities against alanine. One activity is designated as 'pretransfer' editing and involves the tRNA(Pro)-independent hydrolysis of activated Ala-AMP. The other activity is designated 'posttransfer' editing and involves deacylation of mischarged Ala-tRNA(Pro). The misacylated Cys-tRNA(Pro) is not edited by ProRS. In Limosilactobacillus fermentum (strain NBRC 3956 / LMG 18251) (Lactobacillus fermentum), this protein is Proline--tRNA ligase.